Reading from the N-terminus, the 611-residue chain is Threonine--tRNA ligase (611 aa).

The interval 1–27 (MAGPEPEPVSSAAATTPAPSAPVVLPK) is disordered. Positions 8–24 (PVSSAAATTPAPSAPVV) are enriched in low complexity. The interval 209-502 (DHRRIGKDLD…MTENYAGDYP (294 aa)) is catalytic. 3 residues coordinate Zn(2+): cysteine 302, histidine 353, and histidine 479.

Belongs to the class-II aminoacyl-tRNA synthetase family. As to quaternary structure, homodimer. Zn(2+) serves as cofactor.

The protein resides in the cytoplasm. It carries out the reaction tRNA(Thr) + L-threonine + ATP = L-threonyl-tRNA(Thr) + AMP + diphosphate + H(+). Its function is as follows. Catalyzes the attachment of threonine to tRNA(Thr) in a two-step reaction: L-threonine is first activated by ATP to form Thr-AMP and then transferred to the acceptor end of tRNA(Thr). Also edits incorrectly charged L-seryl-tRNA(Thr). The protein is Threonine--tRNA ligase of Synechococcus sp. (strain CC9605).